Consider the following 314-residue polypeptide: Methionyl-tRNA formyltransferase (314 aa).

(6S)-5,6,7,8-tetrahydrofolate is bound at residue Ser112–Pro115.

Belongs to the Fmt family.

The catalysed reaction is L-methionyl-tRNA(fMet) + (6R)-10-formyltetrahydrofolate = N-formyl-L-methionyl-tRNA(fMet) + (6S)-5,6,7,8-tetrahydrofolate + H(+). Its function is as follows. Attaches a formyl group to the free amino group of methionyl-tRNA(fMet). The formyl group appears to play a dual role in the initiator identity of N-formylmethionyl-tRNA by promoting its recognition by IF2 and preventing the misappropriation of this tRNA by the elongation apparatus. This Tolumonas auensis (strain DSM 9187 / NBRC 110442 / TA 4) protein is Methionyl-tRNA formyltransferase.